A 109-amino-acid chain; its full sequence is Iron-sulfur cluster assembly protein CyaY (109 aa).

Belongs to the frataxin family.

In terms of biological role, involved in iron-sulfur (Fe-S) cluster assembly. May act as a regulator of Fe-S biogenesis. The sequence is that of Iron-sulfur cluster assembly protein CyaY from Verminephrobacter eiseniae (strain EF01-2).